Consider the following 179-residue polypeptide: Large ribosomal subunit protein uL5 (179 aa).

This sequence belongs to the universal ribosomal protein uL5 family. In terms of assembly, part of the 50S ribosomal subunit; part of the 5S rRNA/L5/L18/L25 subcomplex. Contacts the 5S rRNA and the P site tRNA. Forms a bridge to the 30S subunit in the 70S ribosome.

Functionally, this is one of the proteins that bind and probably mediate the attachment of the 5S RNA into the large ribosomal subunit, where it forms part of the central protuberance. In the 70S ribosome it contacts protein S13 of the 30S subunit (bridge B1b), connecting the 2 subunits; this bridge is implicated in subunit movement. Contacts the P site tRNA; the 5S rRNA and some of its associated proteins might help stabilize positioning of ribosome-bound tRNAs. This is Large ribosomal subunit protein uL5 from Cronobacter sakazakii (strain ATCC BAA-894) (Enterobacter sakazakii).